We begin with the raw amino-acid sequence, 152 residues long: D-aminoacyl-tRNA deacylase (152 aa).

The short motif at 137 to 138 is the Gly-cisPro motif, important for rejection of L-amino acids element; the sequence is GP.

Belongs to the DTD family. As to quaternary structure, homodimer.

Its subcellular location is the cytoplasm. It carries out the reaction glycyl-tRNA(Ala) + H2O = tRNA(Ala) + glycine + H(+). The enzyme catalyses a D-aminoacyl-tRNA + H2O = a tRNA + a D-alpha-amino acid + H(+). Its function is as follows. An aminoacyl-tRNA editing enzyme that deacylates mischarged D-aminoacyl-tRNAs. Also deacylates mischarged glycyl-tRNA(Ala), protecting cells against glycine mischarging by AlaRS. Acts via tRNA-based rather than protein-based catalysis; rejects L-amino acids rather than detecting D-amino acids in the active site. By recycling D-aminoacyl-tRNA to D-amino acids and free tRNA molecules, this enzyme counteracts the toxicity associated with the formation of D-aminoacyl-tRNA entities in vivo and helps enforce protein L-homochirality. This is D-aminoacyl-tRNA deacylase from Geobacter sulfurreducens (strain ATCC 51573 / DSM 12127 / PCA).